The sequence spans 1400 residues: DNA-directed RNA polymerase subunit beta' (1400 aa).

The Zn(2+) site is built by Cys71, Cys73, Cys86, and Cys89. Positions 462, 464, and 466 each coordinate Mg(2+). Cys820, Cys893, Cys900, and Cys903 together coordinate Zn(2+).

This sequence belongs to the RNA polymerase beta' chain family. The RNAP catalytic core consists of 2 alpha, 1 beta, 1 beta' and 1 omega subunit. When a sigma factor is associated with the core the holoenzyme is formed, which can initiate transcription. Mg(2+) serves as cofactor. Zn(2+) is required as a cofactor.

It catalyses the reaction RNA(n) + a ribonucleoside 5'-triphosphate = RNA(n+1) + diphosphate. DNA-dependent RNA polymerase catalyzes the transcription of DNA into RNA using the four ribonucleoside triphosphates as substrates. This is DNA-directed RNA polymerase subunit beta' from Methylobacterium nodulans (strain LMG 21967 / CNCM I-2342 / ORS 2060).